The chain runs to 292 residues: 33 kDa chaperonin (292 aa).

2 disulfide bridges follow: C230–C232 and C263–C266.

It belongs to the HSP33 family. Post-translationally, under oxidizing conditions two disulfide bonds are formed involving the reactive cysteines. Under reducing conditions zinc is bound to the reactive cysteines and the protein is inactive.

It localises to the cytoplasm. Functionally, redox regulated molecular chaperone. Protects both thermally unfolding and oxidatively damaged proteins from irreversible aggregation. Plays an important role in the bacterial defense system toward oxidative stress. This is 33 kDa chaperonin from Shigella boydii serotype 4 (strain Sb227).